The sequence spans 100 residues: Aspartyl/glutamyl-tRNA(Asn/Gln) amidotransferase subunit C (100 aa).

The protein belongs to the GatC family. In terms of assembly, heterotrimer of A, B and C subunits.

It catalyses the reaction L-glutamyl-tRNA(Gln) + L-glutamine + ATP + H2O = L-glutaminyl-tRNA(Gln) + L-glutamate + ADP + phosphate + H(+). It carries out the reaction L-aspartyl-tRNA(Asn) + L-glutamine + ATP + H2O = L-asparaginyl-tRNA(Asn) + L-glutamate + ADP + phosphate + 2 H(+). In terms of biological role, allows the formation of correctly charged Asn-tRNA(Asn) or Gln-tRNA(Gln) through the transamidation of misacylated Asp-tRNA(Asn) or Glu-tRNA(Gln) in organisms which lack either or both of asparaginyl-tRNA or glutaminyl-tRNA synthetases. The reaction takes place in the presence of glutamine and ATP through an activated phospho-Asp-tRNA(Asn) or phospho-Glu-tRNA(Gln). The protein is Aspartyl/glutamyl-tRNA(Asn/Gln) amidotransferase subunit C of Streptococcus sanguinis (strain SK36).